A 312-amino-acid polypeptide reads, in one-letter code: ECF RNA polymerase sigma factor SigJ (312 aa).

Residues 6–65 are sigma-70 factor domain-2; that stretch reads FEALRQHLMSVAYRLTGTVADAEDIVQEAWLRWDSPDTVIADPRAWLTTVVSRLGLDKLR. The Polymerase core binding motif lies at 29–32; sequence DIVQ. A sigma-70 factor domain-4 region spans residues 107-155; the sequence is MVVLERLRPDQRVAFVLHDGFAVPFAEVAEVLGTSEAAARQLASRARKA. A DNA-binding region (H-T-H motif) is located at residues 131-150; it reads FAEVAEVLGTSEAAARQLAS. The tract at residues 293–312 is disordered; it reads GSPLKERRAQPTGRGRHHRN.

The protein belongs to the sigma-70 factor family. ECF subfamily. Interacts transiently with the RNA polymerase catalytic core formed by RpoA, RpoB, RpoC and RpoZ (2 alpha, 1 beta, 1 beta' and 1 omega subunit) to form the RNA polymerase holoenzyme that can initiate transcription.

In terms of biological role, sigma factors are initiation factors that promote the attachment of RNA polymerase to specific initiation sites and are then released. Extracytoplasmic function (ECF) sigma factors are held in an inactive form by an anti-sigma factor until released, although no anti-sigma factor is known for this protein. Regulates the promoter of SigI, may not be autoregulated. In Mycobacterium tuberculosis (strain ATCC 25618 / H37Rv), this protein is ECF RNA polymerase sigma factor SigJ (sigJ).